A 60-amino-acid chain; its full sequence is Small, acid-soluble spore protein H (60 aa).

It belongs to the SspH family.

The protein resides in the spore core. The polypeptide is Small, acid-soluble spore protein H (Bacillus velezensis (strain DSM 23117 / BGSC 10A6 / LMG 26770 / FZB42) (Bacillus amyloliquefaciens subsp. plantarum)).